The sequence spans 248 residues: Tetraspanin-16 (248 aa).

Residues Met-1–Gly-7 are Cytoplasmic-facing. The chain crosses the membrane as a helical span at residues Phe-8–Leu-28. Over Tyr-29–Ser-44 the chain is Extracellular. A helical membrane pass occupies residues Phe-45–Cys-65. The Cytoplasmic portion of the chain corresponds to His-66–Arg-69. A helical membrane pass occupies residues Met-70 to Leu-90. Topologically, residues Lys-91–Gln-208 are extracellular. Residues Asn-96 and Asn-141 are each glycosylated (N-linked (GlcNAc...) asparagine). The chain crosses the membrane as a helical span at residues Trp-209–Ile-229. The Cytoplasmic portion of the chain corresponds to Ser-230 to Ser-248.

This sequence belongs to the tetraspanin (TM4SF) family.

It is found in the membrane. Functionally, may be involved in the regulation of cell differentiation. In Arabidopsis thaliana (Mouse-ear cress), this protein is Tetraspanin-16 (TET16).